The chain runs to 887 residues: Centrobin (887 aa).

Residues 1–34 are disordered; sequence MATAAPSPSSPLRPEDLLSDSSEPPGLNQVSSEV. S81 is subject to Phosphoserine. Disordered stretches follow at residues 110–153, 465–486, 566–591, and 636–695; these read MLHT…PSSS, SLRQ…LSGQ, TLLP…EKGE, and LGPP…LPPA. Basic and acidic residues predominate over residues 113–128; the sequence is TSRDTAYRTGSERREE. The span at 133 to 153 shows a compositional bias: polar residues; the sequence is SDSTATLLNTRPLQDLSPSSS. A coiled-coil region spans residues 191–557; sequence RRKHCERHIQ…LQAMLQAHWE (367 aa). The segment at 360 to 887 is required for centrosome localization; it reads QEHQLKERLQ…SMRSRGGIWR (528 aa). Positions 670–680 are enriched in basic and acidic residues; the sequence is TDDHRAERPFP. S782 bears the Phosphoserine mark. The tract at residues 824–887 is disordered; the sequence is GTDGQGELVP…SMRSRGGIWR (64 aa). Residues 832-849 show a composition bias toward basic and acidic residues; the sequence is VPRRNTDSRLGETTRKEI.

As to quaternary structure, interacts with LYST.

The protein resides in the cytoplasm. It is found in the cytoskeleton. Its subcellular location is the microtubule organizing center. It localises to the centrosome. The protein localises to the centriole. Its function is as follows. Required for centriole duplication. Inhibition of centriole duplication leading to defects in cytokinesis. The protein is Centrobin (Cntrob) of Mus musculus (Mouse).